The sequence spans 242 residues: MRKILLPYPAGCATGTFVRRVKRFSVEMTRDGESVWVHSNNSGSMLGLLRPGATMLASPAANPDRKLAWTHEAMRCHGDGPQGFWVGVNTSVPNRMVEAAFHAGRLPWAQGYDTFRRERKRGDSRLDARLDGPGLPTLWVECKNVTMVEDDVACFPDAVTERGSKHLREMMDIVSRGERAAMFYLVQRPDGVCFGPADVIDPQYAALFWEAVDAGVEMHPHRGIVSPAGIDLGEVLPLTRCR.

This sequence belongs to the SfsA family.

The polypeptide is Sugar fermentation stimulation protein homolog (Nitratidesulfovibrio vulgaris (strain DP4) (Desulfovibrio vulgaris)).